We begin with the raw amino-acid sequence, 571 residues long: Urease subunit alpha (571 aa).

The Urease domain maps to 133–571; that stretch reads GGIDTHIHFI…LPLAQRYFLF (439 aa). Histidine 138, histidine 140, and lysine 221 together coordinate Ni(2+). Lysine 221 is modified (N6-carboxylysine). Histidine 223 contacts substrate. The Ni(2+) site is built by histidine 250 and histidine 276. Catalysis depends on histidine 324, which acts as the Proton donor. Aspartate 364 contacts Ni(2+).

Belongs to the metallo-dependent hydrolases superfamily. Urease alpha subunit family. In terms of assembly, heterotrimer of UreA (gamma), UreB (beta) and UreC (alpha) subunits. Three heterotrimers associate to form the active enzyme. It depends on Ni cation as a cofactor. Carboxylation allows a single lysine to coordinate two nickel ions.

Its subcellular location is the cytoplasm. The catalysed reaction is urea + 2 H2O + H(+) = hydrogencarbonate + 2 NH4(+). The protein operates within nitrogen metabolism; urea degradation; CO(2) and NH(3) from urea (urease route): step 1/1. This is Urease subunit alpha from Corynebacterium efficiens (strain DSM 44549 / YS-314 / AJ 12310 / JCM 11189 / NBRC 100395).